A 616-amino-acid chain; its full sequence is Zinc metalloproteinase-disintegrin-like ecarin (616 aa).

Residues 1 to 20 form the signal peptide; it reads MIQILLVIICLAVFPYQGCS. Residues 21–190 constitute a propeptide that is removed on maturation; that stretch reads IILGSGNVND…EPIKKTLGLI (170 aa). The 197-residue stretch at 201–397 folds into the Peptidase M12B domain; sequence KFIELVVVVD…YNPKCILDPP (197 aa). Residue Glu-204 coordinates Ca(2+). N-linked (GlcNAc...) asparagine glycans are attached at residues Asn-219 and Asn-261. Asp-288 is a Ca(2+) binding site. N-linked (GlcNAc...) asparagine glycans are attached at residues Asn-295 and Asn-326. Cystine bridges form between Cys-312-Cys-392, Cys-352-Cys-376, and Cys-354-Cys-359. Residue His-337 coordinates Zn(2+). Glu-338 is a catalytic residue. Positions 341 and 347 each coordinate Zn(2+). Positions 392, 407, 410, 412, 414, 417, and 420 each coordinate Ca(2+). One can recognise a Disintegrin domain in the interval 405 to 491; the sequence is PAVCGNEIWE…ECPRNEFQRN (87 aa). 14 cysteine pairs are disulfide-bonded: Cys-408/Cys-437, Cys-419/Cys-432, Cys-421/Cys-427, Cys-431/Cys-454, Cys-445/Cys-451, Cys-450/Cys-476, Cys-463/Cys-483, Cys-470/Cys-502, Cys-495/Cys-507, Cys-514/Cys-567, Cys-529/Cys-578, Cys-542/Cys-555, Cys-562/Cys-604, and Cys-598/Cys-609. Positions 469–471 match the D/ECD-tripeptide motif; it reads DCD. Ca(2+) contacts are provided by Asp-471, Val-472, and Asn-486. N-linked (GlcNAc...) asparagine glycosylation occurs at Asn-497.

This sequence belongs to the venom metalloproteinase (M12B) family. P-III subfamily. P-IIIa sub-subfamily. In terms of assembly, monomer. Zn(2+) is required as a cofactor. As to expression, expressed by the venom gland.

The protein resides in the secreted. Its function is as follows. Snake venom zinc metalloproteinase that catalyzes the conversion of prothrombin (F2) to alpha-thrombin through formation of a thrombin intermediate, thereby functioning as a procoagulant protein. Has a low Km for prothrombin and a high kcat. Cleaves the 320-Arg-Ile-321 bond in prothrombin and produces meizothrombin which is ultimately converted to alpha-thrombin by autolysis. This chain is Zinc metalloproteinase-disintegrin-like ecarin, found in Echis carinatus (Saw-scaled viper).